The chain runs to 1068 residues: MPLNKDIKKVLVIGSGPIVIGQAAEFDYSGTQACEGVKEEGVEVVLINSNPATIMTDKEVADKVYLEPLTVEFVEKVIAKERPDSLLAGMGGQTGLNLAVELYDKGILKKCGVNVIGTSIESIKEGEDRELFRNVMSRINEPVIQSEIVTDIENGKAFANKIGYPVIVRPAYTLGGTGGGIAESEEELDEILALGLQVSSIGQVLLEKSVKGWKEIEYEVMRDSRGNCVTVCNMENIDPVGIHTGDSIVVAPSQTLSDKEYQMLRSASINIINSIGIKGGCNVQFALNPNSFEYAVIEINPRVSRSSALASKATGYPIAKVAAKIALGYTLDEIKNAVTQKTYACFEPSLDYVVVKIPKWPFDKFQGADRVLGTKMMATGEIMAIGSNFEAAFLKGIRSLEIGKYSLEHKKFREFSMEELKTRVISPDDERIFALAEMLRRDYRMDKVAEITGIDKFFIKKFRWIVEEEQRLILSKIDDLDKEWLYKLKKKGFSDKGIADMLNISPEDIYKLRNIWGINPVYKMVDTCGGEFEALSPYYYSTYDVYDEVEVSKNKKVIVIGSGPIRIGQGIEFDYASVHCVKALKKLGIETIIVNNNPETVSTDFDVSDKLYFEPLTEEDVLNIVEKEKPNGIILQFGGQTAIKLAKFLKEKNIPILGTTAGQIDMAEDREKFDELLEKLQISRPKGKGIWSVEDGLEETKKLGFPVLVRPSYVLGGQGMEITHDEKELVYYLSNAFQKNKKNPILIDKYLMGREIEVDAISDGEDVLIPGIMEHLERAGVHSGDSITMYPTQNVSKDIKEKILEYTKKLALGIGIKGMINIQFIEFEGNLYVIEVNPRASRTVPYISKVSKVPIVDIATRVMLGEKLNDLGYRVGVYKEPELISVKVPVFSTQKLPRVEVCLGPEMKSTGEVLGVGKTLEEALYKGFIGANMSIKKEKGTILATINDHDKEEFLPIAKKLHSIGYKFIATSKTAELLKEEGIEVKQVRKLKEESPNIIDTIKNDEVDLVINTPTKGNDSKRDGFHIRRAAIERNLGVITSLDTLKAIVNIKSKEIKDETLHIFDLSN.

Positions 1–401 are carboxyphosphate synthetic domain; sequence MPLNKDIKKV…AFLKGIRSLE (401 aa). ATP is bound by residues Arg-129, Arg-169, Gly-175, Gly-176, Lys-208, Val-210, Glu-215, Gly-241, Ile-242, His-243, Gln-284, and Glu-298. In terms of domain architecture, ATP-grasp 1 spans 133–327; that stretch reads RNVMSRINEP…IAKVAAKIAL (195 aa). 3 residues coordinate Mg(2+): Gln-284, Glu-298, and Asn-300. Residues Gln-284, Glu-298, and Asn-300 each contribute to the Mn(2+) site. The tract at residues 402 to 549 is oligomerization domain; it reads IGKYSLEHKK…YSTYDVYDEV (148 aa). The interval 550 to 932 is carbamoyl phosphate synthetic domain; the sequence is EVSKNKKVIV…ALYKGFIGAN (383 aa). Residues 674 to 864 enclose the ATP-grasp 2 domain; the sequence is DELLEKLQIS…IVDIATRVML (191 aa). The ATP site is built by Arg-710, Lys-749, Leu-751, Glu-755, Gly-780, Val-781, His-782, Ser-783, Gln-823, and Glu-835. Gln-823, Glu-835, and Asn-837 together coordinate Mg(2+). Gln-823, Glu-835, and Asn-837 together coordinate Mn(2+). Residues 933–1068 form the MGS-like domain; that stretch reads MSIKKEKGTI…ETLHIFDLSN (136 aa). Positions 933–1068 are allosteric domain; it reads MSIKKEKGTI…ETLHIFDLSN (136 aa).

Belongs to the CarB family. As to quaternary structure, composed of two chains; the small (or glutamine) chain promotes the hydrolysis of glutamine to ammonia, which is used by the large (or ammonia) chain to synthesize carbamoyl phosphate. Tetramer of heterodimers (alpha,beta)4. Mg(2+) serves as cofactor. The cofactor is Mn(2+).

The enzyme catalyses hydrogencarbonate + L-glutamine + 2 ATP + H2O = carbamoyl phosphate + L-glutamate + 2 ADP + phosphate + 2 H(+). It carries out the reaction hydrogencarbonate + NH4(+) + 2 ATP = carbamoyl phosphate + 2 ADP + phosphate + 2 H(+). Its pathway is amino-acid biosynthesis; L-arginine biosynthesis; carbamoyl phosphate from bicarbonate: step 1/1. The protein operates within pyrimidine metabolism; UMP biosynthesis via de novo pathway; (S)-dihydroorotate from bicarbonate: step 1/3. Its function is as follows. Large subunit of the glutamine-dependent carbamoyl phosphate synthetase (CPSase). CPSase catalyzes the formation of carbamoyl phosphate from the ammonia moiety of glutamine, carbonate, and phosphate donated by ATP, constituting the first step of 2 biosynthetic pathways, one leading to arginine and/or urea and the other to pyrimidine nucleotides. The large subunit (synthetase) binds the substrates ammonia (free or transferred from glutamine from the small subunit), hydrogencarbonate and ATP and carries out an ATP-coupled ligase reaction, activating hydrogencarbonate by forming carboxy phosphate which reacts with ammonia to form carbamoyl phosphate. This Clostridium botulinum (strain Loch Maree / Type A3) protein is Carbamoyl phosphate synthase large chain.